Reading from the N-terminus, the 241-residue chain is N-acetylmuramoyl-L-alanine amidase Rv3717 (241 aa).

The first 24 residues, 1-24 (MIVGVLVAAATPIISSASATPANI), serve as a signal peptide directing secretion. Residues 29 to 230 (VFIDPGHNGA…KYANALVRGV (202 aa)) form the MurNAc-LAA domain. His35 is a binding site for Zn(2+). Residues 45–69 (RQVPTGRGGTKNCQASGTSTNSGYP) are disordered. Over residues 55 to 67 (KNCQASGTSTNSG) the composition is skewed to polar residues. A disulfide bridge connects residues Cys57 and Cys105. Glu70 and His125 together coordinate Zn(2+). The active-site Proton donor/acceptor is the Glu200.

It belongs to the N-acetylmuramoyl-L-alanine amidase 3 family. Monomer. It depends on Zn(2+) as a cofactor.

It is found in the periplasm. It catalyses the reaction Hydrolyzes the link between N-acetylmuramoyl residues and L-amino acid residues in certain cell-wall glycopeptides.. The protein operates within cell wall degradation; peptidoglycan degradation. With respect to regulation, the structure reveals a short flexible hairpin turn that partially occludes the active site and may be involved in autoregulation. In terms of biological role, cell-wall hydrolase that hydrolyzes the amide bond between N-acetylmuramic acid and L-alanine in cell-wall glycopeptides. Is able to hydrolyze the cell walls of several bacterial species (i.e. Paenibacillus sp., B.avium, E.coli DH5alpha, E.aerogenes, L.acidophilus, B.thuringiensis, B.pumilus, B.subtilis and E.coli W3110), thereby showing that it is a cell-wall hydrolase with broad-spectrum activity. May have a role in peptidoglycan fragment recycling. This Mycobacterium tuberculosis (strain ATCC 25618 / H37Rv) protein is N-acetylmuramoyl-L-alanine amidase Rv3717.